The primary structure comprises 142 residues: SsrA-binding protein (142 aa).

The protein belongs to the SmpB family.

It localises to the cytoplasm. Its function is as follows. Required for rescue of stalled ribosomes mediated by trans-translation. Binds to transfer-messenger RNA (tmRNA), required for stable association of tmRNA with ribosomes. tmRNA and SmpB together mimic tRNA shape, replacing the anticodon stem-loop with SmpB. tmRNA is encoded by the ssrA gene; the 2 termini fold to resemble tRNA(Ala) and it encodes a 'tag peptide', a short internal open reading frame. During trans-translation Ala-aminoacylated tmRNA acts like a tRNA, entering the A-site of stalled ribosomes, displacing the stalled mRNA. The ribosome then switches to translate the ORF on the tmRNA; the nascent peptide is terminated with the 'tag peptide' encoded by the tmRNA and targeted for degradation. The ribosome is freed to recommence translation, which seems to be the essential function of trans-translation. This is SsrA-binding protein from Mycoplasma mobile (strain ATCC 43663 / 163K / NCTC 11711) (Mesomycoplasma mobile).